The following is an 84-amino-acid chain: Putative membrane protein insertion efficiency factor (84 aa).

The protein belongs to the UPF0161 family.

The protein resides in the cell inner membrane. In terms of biological role, could be involved in insertion of integral membrane proteins into the membrane. The polypeptide is Putative membrane protein insertion efficiency factor (Shewanella frigidimarina (strain NCIMB 400)).